The chain runs to 441 residues: Acetyltransferase TRI7 (441 aa).

Transmembrane regions (helical) follow at residues 14 to 34 (GILY…LIII), 75 to 95 (SLTL…LVLT), 158 to 178 (IWFI…LDII), 306 to 326 (IAFV…FCWG), 336 to 356 (LAFF…QALC), 377 to 397 (LVGY…YLYH), and 421 to 441 (TATM…GIEV).

This sequence belongs to the wax synthase family.

The protein resides in the membrane. The protein operates within sesquiterpene biosynthesis; trichothecene biosynthesis. In terms of biological role, acetyltransferase; part of the core gene cluster that mediates the biosynthesis of trichothecenes, a very large family of chemically related bicyclic sesquiterpene compounds acting as mycotoxins, including T2-toxin. The biosynthesis of trichothecenes begins with the cyclization of farnesyl diphosphate to trichodiene and is catalyzed by the trichodiene synthase TRI5. Trichodiene undergoes a series of oxygenations catalyzed by the cytochrome P450 monooxygenase TRI4. TRI4 controls the addition of four oxygens at C-2, C-3, C-11, and the C-12, C-13-epoxide to form the intermediate isotrichotriol. Isotrichotriol then undergoes a non-enzymatic isomerization and cyclization to form isotrichodermol. During this process, the oxygen at the C-2 position becomes the pyran ring oxygen and the hydroxyl group at C-11 is lost. More complex type A trichothecenes are built by modifying isotrichodermol through a series of paired hydroxylation and acetylation or acylation steps. Isotrichodermol is converted to isotrichodermin by the acetyltransferase TRI101. TRI101 encodes a C-3 transacetylase that acts as a self-protection or resistance factor during biosynthesis and that the presence of a free C-3 hydroxyl group is a key component of Fusarium trichothecene phytotoxicity. A second hydroxyl group is added to C-15 by the trichothecene C-15 hydroxylase TRI11, producing 15-decalonectrin, which is then acetylated by TRI3, producing calonectrin. A third hydroxyl group is added at C-4 by the cytochrome P450 monooxygenase TRI13, converting calonectrin to 3,15-diacetoxyspirpenol, which is subsequently acetylated by the acetyltransferase TRI7. A fourth hydroxyl group is added to C-8 by the cytochrome P450 monooxygenase TRI1, followed by the addition of an isovaleryl moiety by TRI16. Finally, the acetyl group is removed from the C-3 position by the trichothecene C-3 esterase TRI8 to produce T-2 toxin. The chain is Acetyltransferase TRI7 from Fusarium sporotrichioides.